We begin with the raw amino-acid sequence, 475 residues long: Bifunctional aspartate aminotransferase and glutamate/aspartate-prephenate aminotransferase (475 aa).

The transit peptide at 1–55 (MASQSSVAVISSAAARGESFPDSKKPIGSVRFQQPLRLSFSYCKSGNMSSRICAM) directs the protein to the chloroplast. Residues glycine 107, tryptophan 193, and asparagine 243 each contribute to the L-aspartate site. Lysine 306 bears the N6-(pyridoxal phosphate)lysine mark. L-aspartate is bound at residue arginine 445.

Belongs to the class-I pyridoxal-phosphate-dependent aminotransferase family. As to quaternary structure, homodimer. The cofactor is pyridoxal 5'-phosphate.

The protein localises to the plastid. Its subcellular location is the chloroplast. It carries out the reaction L-aspartate + 2-oxoglutarate = oxaloacetate + L-glutamate. It catalyses the reaction L-arogenate + oxaloacetate = prephenate + L-aspartate. The enzyme catalyses L-arogenate + 2-oxoglutarate = prephenate + L-glutamate. It participates in amino-acid biosynthesis; L-phenylalanine biosynthesis; L-arogenate from prephenate (L-Asp route): step 1/1. It functions in the pathway amino-acid biosynthesis; L-phenylalanine biosynthesis; L-arogenate from prephenate (L-Glu route): step 1/1. In terms of biological role, prokaryotic-type aspartate aminotransferase. Also has a prenate transaminase activity. Involved in the aromatic amino acids biosynthesis pathway via the arogenate route. Required for the transamination of prephenate into arogenate. Required for early development of the embryo. The polypeptide is Bifunctional aspartate aminotransferase and glutamate/aspartate-prephenate aminotransferase (PAT) (Arabidopsis thaliana (Mouse-ear cress)).